Here is a 289-residue protein sequence, read N- to C-terminus: MYB transcription factor 69 (289 aa).

2 HTH myb-type domains span residues 9-61 and 62-116; these read KAGV…TNYL and RPGI…KKKL. 2 consecutive DNA-binding regions (H-T-H motif) follow at residues 37 to 61 and 89 to 112; these read WRAV…TNYL and WAAI…NTHL. 2 disordered regions span residues 127–162 and 225–252; these read APPR…ADST and SSAI…QQQQ. The span at 139–154 shows a compositional bias: basic and acidic residues; that stretch reads ADCRRHDMTRSSKDSH.

As to expression, mainly expressed in highly lignified tissues such as vascular tissues.

The protein localises to the nucleus. Its function is as follows. Transcription factor that binds to the promoter of MYB31 and MYB42 and activates directly their expression, thus repressing lignin biosynthesis. The protein is MYB transcription factor 69 of Zea mays (Maize).